Consider the following 470-residue polypeptide: Pre-mycofactocin glycosyltransferase (470 aa).

Residues 315–335 form a helical membrane-spanning segment; sequence LVISGGALMAWILMSIGTGLG.

This sequence belongs to the glycosyltransferase 2 family.

The protein localises to the cell membrane. Its function is as follows. Involved in the biosynthesis of the enzyme cofactor mycofactocin (MFT). Acts as a glycosyltransferase that catalyzes the oligoglycosylation of pre-mycofactocin (PMFT), adding up to nine beta-1,4-linked glucose residues. Is required for the in vivo ethanol assimilation in M.smegmatis. The sequence is that of Pre-mycofactocin glycosyltransferase (mftF) from Mycobacterium tuberculosis (strain CDC 1551 / Oshkosh).